The sequence spans 289 residues: N-acetylmuramoyl-L-alanine amidase AmiA (289 aa).

The segment at residues 1 to 34 is a signal peptide (tat-type signal); it reads MSTFKLLKTLTSRRQVLKTGLAALTLSGMSHAVA. The disordered stretch occupies residues 36–61; sequence EETLKTSNGHSKPKTKKTGSKRLVML. A compositionally biased stretch (basic residues) spans 46–55; that stretch reads SKPKTKKTGS. Residues 59-273 form the MurNAc-LAA domain; that stretch reads VMLDPGHGGI…IATAIANGII (215 aa).

It belongs to the N-acetylmuramoyl-L-alanine amidase 3 family. In terms of processing, predicted to be exported by the Tat system. The position of the signal peptide cleavage has not been experimentally proven.

The protein resides in the periplasm. The enzyme catalyses Hydrolyzes the link between N-acetylmuramoyl residues and L-amino acid residues in certain cell-wall glycopeptides.. Cell-wall hydrolase involved in septum cleavage during cell division. The chain is N-acetylmuramoyl-L-alanine amidase AmiA (amiA) from Salmonella typhimurium (strain LT2 / SGSC1412 / ATCC 700720).